Here is a 227-residue protein sequence, read N- to C-terminus: RNA pyrophosphohydrolase (227 aa).

Residues 6 to 149 (GFRPNVGIIL…KRDVYQMALT (144 aa)) form the Nudix hydrolase domain. The Nudix box signature appears at 38 to 59 (GGIKYGETPEQAMYRELHEEIG). The disordered stretch occupies residues 165-227 (PYGTHGAHGA…PVSTTRSTDD (63 aa)). The segment covering 192-201 (AQAAQQADAD) has biased composition (low complexity). Residues 217–227 (TPVSTTRSTDD) are compositionally biased toward polar residues.

This sequence belongs to the Nudix hydrolase family. RppH subfamily. It depends on a divalent metal cation as a cofactor.

Functionally, accelerates the degradation of transcripts by removing pyrophosphate from the 5'-end of triphosphorylated RNA, leading to a more labile monophosphorylated state that can stimulate subsequent ribonuclease cleavage. In Cupriavidus taiwanensis (strain DSM 17343 / BCRC 17206 / CCUG 44338 / CIP 107171 / LMG 19424 / R1) (Ralstonia taiwanensis (strain LMG 19424)), this protein is RNA pyrophosphohydrolase.